Here is a 513-residue protein sequence, read N- to C-terminus: Calcium-dependent protein kinase 2 (513 aa).

A lipid anchor (N-myristoyl glycine) is attached at Gly-2. A Protein kinase domain is found at Tyr-72–Ile-326. ATP-binding positions include Leu-78–Val-86 and Lys-101. The active-site Proton acceptor is the Asp-192. Positions Asn-345–Asn-353 match the J domain autoinhibitory motif motif. The segment at Asn-345–Ile-380 is j domain. The J domain EF-hand interaction motif motif lies at Glu-354 to Ile-363. 4 EF-hand domains span residues Val-370–Gln-405, Lys-406–Tyr-441, Leu-442–Glu-477, and Leu-480–Lys-513. Ca(2+) contacts are provided by Asp-383, Asp-385, Ser-387, Thr-389, and Glu-394. 10 residues coordinate Ca(2+): Asp-455, Asp-457, Asn-459, Lys-461, Glu-466, Asp-493, Asn-495, Asp-497, Glu-499, and Glu-504.

The protein belongs to the protein kinase superfamily. Ser/Thr protein kinase family. CDPK subfamily. Monomer. It depends on Mg(2+) as a cofactor. In terms of processing, myristoylated; myristoylation may target it to different subcellular compartments. Autophosphorylated in vitro.

The catalysed reaction is L-seryl-[protein] + ATP = O-phospho-L-seryl-[protein] + ADP + H(+). It carries out the reaction L-threonyl-[protein] + ATP = O-phospho-L-threonyl-[protein] + ADP + H(+). Its activity is regulated as follows. Activated by calcium. Upon calcium binding to the EF-hand domains, the C-terminus of the junction domain (J domain) undergoes a conformational change which results in the dissociation of the pseudo-substrate inhibitory motif from the catalytic domain. This, in turn, may facilitate the autophosphorylation of the activation loop at Thr-232, which leads to the kinase activation. Calcium-dependent protein kinase which acts as a sensor and effector of intracellular Ca(2+) levels probably in part downstream of cGMP-activated PKG kinase. During male gametogenesis in the mosquito gut, required for male exflagellation, possibly by regulating male gamete exit from the host erythrocytes. Not required for asexual blood stage proliferation. The protein is Calcium-dependent protein kinase 2 of Plasmodium falciparum (isolate K1 / Thailand).